We begin with the raw amino-acid sequence, 233 residues long: MVRDIKTFKFFEVLLIYEMLEVLKALAMMNATRKVVKISSKELAEHIGQSLQTAARKLKELEDEGLIDRTLTKDGQFVVITEKGKQLLYKEYMDYKKIFDDEGTIKIKGEVFSGVGEGRYYVSLEGYRKQFREKLGFDPYPGTLNLRIPKEEMYFRRRLDEERGILIEGFSTEDRTFGEVKAFKCRINGIEGAIVIPKRTHYPAEILEVISPVKLRDKLGLKDGDFVEVEVIL.

The H-T-H motif-like stretch occupies residues 1-104; that stretch reads MVRDIKTFKF…YKKIFDDEGT (104 aa). A riboflavin kinase region spans residues 105–233; the sequence is IKIKGEVFSG…GDFVEVEVIL (129 aa). Residue 114–119 coordinates CDP; sequence GVGEGR. Threonine 143 and asparagine 145 together coordinate Mg(2+). FMN-binding residues include threonine 200 and glutamate 208. Residue 213 to 216 participates in CDP binding; it reads VKLR.

This sequence belongs to the archaeal riboflavin kinase family. Requires Mg(2+) as cofactor.

The catalysed reaction is riboflavin + CTP = CDP + FMN + H(+). It functions in the pathway cofactor biosynthesis; FMN biosynthesis; FMN from riboflavin (CTP route): step 1/1. Catalyzes the CTP-dependent phosphorylation of riboflavin (vitamin B2) to form flavin mononucleotide (FMN). This is Riboflavin kinase (ribK) from Archaeoglobus fulgidus (strain ATCC 49558 / DSM 4304 / JCM 9628 / NBRC 100126 / VC-16).